The chain runs to 203 residues: Small ribosomal subunit protein uS4 (203 aa).

Residues 93–156 enclose the S4 RNA-binding domain; it reads QRLDNVVFRL…MKVPAILEAV (64 aa).

The protein belongs to the universal ribosomal protein uS4 family. As to quaternary structure, part of the 30S ribosomal subunit. Contacts protein S5. The interaction surface between S4 and S5 is involved in control of translational fidelity.

Functionally, one of the primary rRNA binding proteins, it binds directly to 16S rRNA where it nucleates assembly of the body of the 30S subunit. Its function is as follows. With S5 and S12 plays an important role in translational accuracy. The polypeptide is Small ribosomal subunit protein uS4 (Lactococcus lactis subsp. lactis (strain IL1403) (Streptococcus lactis)).